The following is a 170-amino-acid chain: Alpha-crystallin A chain (170 aa).

Residue Met-1 is modified to N-acetylmethionine. Residues 1 to 63 (MDVTIQQPWF…RTALDSGISE (63 aa)) form a required for complex formation with BFSP1 and BFSP2 region. Gln-6 is modified (deamidated glutamine; partial). Ser-45 is subject to Phosphoserine. Gln-50 bears the Deamidated glutamine; partial mark. In terms of domain architecture, sHSP spans 52-161 (LFRTALDSGI…SERPIPVSRE (110 aa)). Residues Lys-70 and Lys-99 each carry the N6-acetyllysine modification. His-100 is a binding site for Zn(2+). Asn-101 is subject to Deamidated asparagine; partial. Residues Glu-102, His-107, and His-151 each coordinate Zn(2+). The segment at 144–170 (PKIVDPSHSERPIPVSREEKPSSAPSS) is disordered. The segment covering 148-164 (DPSHSERPIPVSREEKP) has biased composition (basic and acidic residues). Ser-159 is a glycosylation site (O-linked (GlcNAc) serine).

This sequence belongs to the small heat shock protein (HSP20) family. As to quaternary structure, heteromer composed of three CRYAA and one CRYAB subunits. Inter-subunit bridging via zinc ions enhances stability, which is crucial as there is no protein turn over in the lens. Can also form homodimers and homotetramers (dimers of dimers) which serve as the building blocks of homooligomers. Within homooligomers, the zinc-binding motif is created from residues of 3 different molecules. His-100 and Glu-102 from one molecule are ligands of the zinc ion, and His-107 and His-151 residues from additional molecules complete the site with tetrahedral coordination geometry. Part of a complex required for lens intermediate filament formation composed of BFSP1, BFSP2 and CRYAA. Post-translationally, acetylation at Lys-70 may increase chaperone activity. In terms of processing, undergoes age-dependent proteolytical cleavage at the C-terminus.

The protein resides in the cytoplasm. It localises to the nucleus. Functionally, contributes to the transparency and refractive index of the lens. Acts as a chaperone, preventing aggregation of various proteins under a wide range of stress conditions. Required for the correct formation of lens intermediate filaments as part of a complex composed of BFSP1, BFSP2 and CRYAA. The polypeptide is Alpha-crystallin A chain (CRYAA) (Bradypus variegatus (Brown-throated three-fingered sloth)).